The chain runs to 117 residues: UPF0122 protein Dred_2057 (117 aa).

It belongs to the UPF0122 family.

Functionally, might take part in the signal recognition particle (SRP) pathway. This is inferred from the conservation of its genetic proximity to ftsY/ffh. May be a regulatory protein. The polypeptide is UPF0122 protein Dred_2057 (Desulforamulus reducens (strain ATCC BAA-1160 / DSM 100696 / MI-1) (Desulfotomaculum reducens)).